The following is a 38-amino-acid chain: Large ribosomal subunit protein bL36c (38 aa).

The protein belongs to the bacterial ribosomal protein bL36 family.

The protein localises to the plastid. It is found in the apicoplast. The protein is Large ribosomal subunit protein bL36c (rpl36) of Theileria parva (East coast fever infection agent).